The primary structure comprises 493 residues: Desmethylyatein synthase (493 aa).

A helical transmembrane segment spans residues 1 to 21; sequence METFQCLTLFLLFISTVFILK. Cys-434 contributes to the heme binding site.

The protein belongs to the cytochrome P450 family. Heme is required as a cofactor.

Its subcellular location is the membrane. It catalyses the reaction (-)-bursehernin + reduced [NADPH--hemoprotein reductase] + O2 = (-)-5'-demethylyatein + oxidized [NADPH--hemoprotein reductase] + H2O + H(+). It functions in the pathway aromatic compound metabolism; phenylpropanoid biosynthesis. In terms of biological role, cytochrome P450 involved in the biosynthesis of etoposide, a chemotherapeutic compound of the topoisomerase inhibitor family. Catalyzes the conversion of bursehernin to demethylyatein. This chain is Desmethylyatein synthase, found in Sinopodophyllum hexandrum (Himalayan may apple).